A 669-amino-acid polypeptide reads, in one-letter code: DNA ligase (669 aa).

Residues 33 to 37, 82 to 83, and glutamate 115 each bind NAD(+); these read DVTYD and SL. Lysine 117 (N6-AMP-lysine intermediate) is an active-site residue. The NAD(+) site is built by arginine 138, glutamate 172, lysine 286, and lysine 310. Residues cysteine 401, cysteine 404, cysteine 417, and cysteine 422 each contribute to the Zn(2+) site. The BRCT domain occupies 589–669; that stretch reads IDSSFLFGKK…DIKNLVNLDD (81 aa).

This sequence belongs to the NAD-dependent DNA ligase family. LigA subfamily. Mg(2+) is required as a cofactor. The cofactor is Mn(2+).

It carries out the reaction NAD(+) + (deoxyribonucleotide)n-3'-hydroxyl + 5'-phospho-(deoxyribonucleotide)m = (deoxyribonucleotide)n+m + AMP + beta-nicotinamide D-nucleotide.. Its function is as follows. DNA ligase that catalyzes the formation of phosphodiester linkages between 5'-phosphoryl and 3'-hydroxyl groups in double-stranded DNA using NAD as a coenzyme and as the energy source for the reaction. It is essential for DNA replication and repair of damaged DNA. This chain is DNA ligase, found in Borrelia recurrentis (strain A1).